A 505-amino-acid chain; its full sequence is Glycerol kinase (505 aa).

Position 12 (Thr-12) interacts with ADP. ATP is bound by residues Thr-12, Thr-13, and Ser-14. Thr-12 provides a ligand contact to sn-glycerol 3-phosphate. Arg-16 is an ADP binding site. Sn-glycerol 3-phosphate contacts are provided by Arg-82, Glu-83, Tyr-134, and Asp-249. Residues Arg-82, Glu-83, Tyr-134, Asp-249, and Gln-250 each coordinate glycerol. Residues Thr-271 and Gly-315 each contribute to the ADP site. Residues Thr-271, Gly-315, Gln-319, and Gly-416 each contribute to the ATP site. Residues Gly-416 and Asn-420 each coordinate ADP.

It belongs to the FGGY kinase family.

It catalyses the reaction glycerol + ATP = sn-glycerol 3-phosphate + ADP + H(+). It participates in polyol metabolism; glycerol degradation via glycerol kinase pathway; sn-glycerol 3-phosphate from glycerol: step 1/1. With respect to regulation, inhibited by fructose 1,6-bisphosphate (FBP). Key enzyme in the regulation of glycerol uptake and metabolism. Catalyzes the phosphorylation of glycerol to yield sn-glycerol 3-phosphate. The protein is Glycerol kinase of Mycolicibacterium vanbaalenii (strain DSM 7251 / JCM 13017 / BCRC 16820 / KCTC 9966 / NRRL B-24157 / PYR-1) (Mycobacterium vanbaalenii).